A 496-amino-acid polypeptide reads, in one-letter code: Inosine-5'-monophosphate dehydrogenase (496 aa).

CBS domains follow at residues 96–152 and 156–212; these read VIKD…TKKV and MTKD…PQAA. NAD(+)-binding positions include D247 and 299–301; that span reads GIG. G301 and G303 together coordinate K(+). Residue S304 coordinates IMP. C306 lines the K(+) pocket. C306 (thioimidate intermediate) is an active-site residue. IMP contacts are provided by residues 339–341, 362–363, and 386–390; these read DGG, GS, and YRGMG. R405 (proton acceptor) is an active-site residue. E423 contacts IMP. Residues E477, S478, and H479 each contribute to the K(+) site.

The protein belongs to the IMPDH/GMPR family. In terms of assembly, homotetramer. Requires K(+) as cofactor.

The enzyme catalyses IMP + NAD(+) + H2O = XMP + NADH + H(+). It participates in purine metabolism; XMP biosynthesis via de novo pathway; XMP from IMP: step 1/1. With respect to regulation, mycophenolic acid (MPA) is a non-competitive inhibitor that prevents formation of the closed enzyme conformation by binding to the same site as the amobile flap. In contrast, mizoribine monophosphate (MZP) is a competitive inhibitor that induces the closed conformation. MPA is a potent inhibitor of mammalian IMPDHs but a poor inhibitor of the bacterial enzymes. MZP is a more potent inhibitor of bacterial IMPDH. Its function is as follows. Catalyzes the conversion of inosine 5'-phosphate (IMP) to xanthosine 5'-phosphate (XMP), the first committed and rate-limiting step in the de novo synthesis of guanine nucleotides, and therefore plays an important role in the regulation of cell growth. This Methanocaldococcus jannaschii (strain ATCC 43067 / DSM 2661 / JAL-1 / JCM 10045 / NBRC 100440) (Methanococcus jannaschii) protein is Inosine-5'-monophosphate dehydrogenase.